The primary structure comprises 107 residues: QILLTQSPAIMSASPGQKVTMTCSASSSVSYMHWYQQKSGTSPKRWIYDTSKLASGVPARFXGSGSATSYSLTITSMQAEDAATYYCQQWSSNPLTFGSGTKLEXKR.

Residues 1 to 23 (QILLTQSPAIMSASPGQKVTMTC) form a framework-1 region. A disulfide bridge connects residues C23 and C87. Residues 24–33 (SASSSVSYMH) are complementarity-determining-1. The framework-2 stretch occupies residues 34–48 (WYQQKSGTSPKRWIY). Residues 49–55 (DTSKLAS) form a complementarity-determining-2 region. The interval 56–87 (GVPARFXGSGSATSYSLTITSMQAEDAATYYC) is framework-3. The interval 88 to 96 (QQWSSNPLT) is complementarity-determining-3. The framework-4 stretch occupies residues 97 to 106 (FGSGTKLEXK).

Its function is as follows. Anti-2-phenyl oxazolone (PHOX) Antibody. This is Ig kappa chain V-VI region NQ5-78.2.6 from Mus musculus (Mouse).